The following is a 1031-amino-acid chain: LRR receptor-like serine/threonine-protein kinase EFR (1031 aa).

The first 24 residues, 1-24 (MKLSFSLVFNALTLLLQVCIFAQA), serve as a signal peptide directing secretion. Residues 25–653 (RFSNETDMQA…LSVRKKVVSG (629 aa)) lie on the Extracellular side of the membrane. Residues Asn-28, Asn-55, and Asn-95 are each glycosylated (N-linked (GlcNAc...) asparagine). LRR repeat units lie at residues 98–120 (FLRL…VGRL), 122–144 (RLQY…LSNC), 146–168 (RLST…LGSL), 170–193 (KLAI…GNLT), 194–216 (SLQK…VARL), 218–240 (QMVF…LYNI), 242–264 (SLES…FGYL), 267–289 (NLRR…LANI), 291–312 (SLER…SFGK), and 315–335 (NLWW…SGLE). N-linked (GlcNAc...) asparagine glycosylation is found at Asn-127 and Asn-143. N-linked (GlcNAc...) asparagine glycosylation is found at Asn-180 and Asn-191. Asn-239 is a glycosylation site (N-linked (GlcNAc...) asparagine). N-linked (GlcNAc...) asparagine glycosylation occurs at Asn-288. N-linked (GlcNAc...) asparagine glycosylation is found at Asn-323, Asn-329, Asn-342, and Asn-366. 11 LRR repeats span residues 345–368 (QLEY…ANLS), 370–392 (TLTS…IGNL), 394–416 (SLQE…FGKL), 418–440 (NLQV…FGNM), 442–464 (RLQK…LGRC), 466–487 (YLLD…EILQ), 490–512 (SLAY…VGKL), 514–536 (LLVG…IGGC), 538–560 (SMEF…SRLV), 561–584 (SLKN…ASLP), and 585–597 (SLRN…NKFE). N-linked (GlcNAc...) asparagine glycosylation is present at Asn-439. A glycan (N-linked (GlcNAc...) asparagine) is linked at Asn-478. Residues Asn-571, Asn-590, and Asn-608 are each glycosylated (N-linked (GlcNAc...) asparagine). Residues 654 to 674 (ICIGIASLLLIIIVASLCWFM) form a helical membrane-spanning segment. At 675 to 1031 (KRKKKNNASD…WMLNTDMHTM (357 aa)) the chain is on the cytoplasmic side. Thr-709 carries the post-translational modification Phosphothreonine. The 290-residue stretch at 712–1001 (FSSTNLIGSG…ELISIRSKFF (290 aa)) folds into the Protein kinase domain. ATP is bound by residues 718 to 726 (IGSGNFGNV) and Lys-741. A phosphotyrosine mark is found at Tyr-791 and Tyr-836. The active-site Proton acceptor is Asp-849. At Tyr-897 the chain carries Phosphotyrosine. Polar residues predominate over residues 1005-1020 (TTITESPRDAPQSSPQ). Positions 1005–1031 (TTITESPRDAPQSSPQEWMLNTDMHTM) are disordered.

Belongs to the protein kinase superfamily. Ser/Thr protein kinase family. Binds to Pseudomonas syringae AvrPto1 and (via the kinase and cytoplasmic domains) to hopD2. Interacts with SERK3/BAK1, SERK4/BKK1, SERK1 and SERK2 in a specific ligand-induced manner. Binds to IOS1. Binds to BIK1 in the absence of pathogen elicitor; dissociates upon pathogen-associated molecular pattern (PAMP)-triggered activation. Autophosphorylated after elicitation with elfl18. Autophosphorylation is inhibited by the binding with avrPto1. Phosphorylation at T-836 is required for immune signaling. In terms of processing, polyubiquitinated at the kinase domain mediated by P.syringae AvrPtoB.

The protein resides in the cell membrane. It localises to the endomembrane system. It catalyses the reaction L-seryl-[protein] + ATP = O-phospho-L-seryl-[protein] + ADP + H(+). The catalysed reaction is L-threonyl-[protein] + ATP = O-phospho-L-threonyl-[protein] + ADP + H(+). Functionally, constitutes the pattern-recognition receptor (PPR) that determines the specific perception of elongation factor Tu (EF-Tu), a potent elicitor of the defense response to pathogen-associated molecular patterns (PAMPs); phosphorylates BIK1 upon elicitation to regulate immune responses such as defense hormone expression (e.g. jasmonic acid (JA) and salicylic acid (SA)). Reduces transformation by Rhizobium radiobacter probably by inducing plant defense during the interaction. Binding to the effector AvrPto1 from P.syringae blocks the downstream plant immune response while interaction with hopD2 decreases the phosphorylation level of EFR upon elf18 treatment. Specific endoplasmic reticulum quality control components (ERD2B, CRT3, UGGT and STT3A) are required for the biogenesis of EFR. This chain is LRR receptor-like serine/threonine-protein kinase EFR, found in Arabidopsis thaliana (Mouse-ear cress).